Here is a 161-residue protein sequence, read N- to C-terminus: Regulator of ribonuclease activity A (161 aa).

Belongs to the RraA family. Homotrimer. Binds to both RNA-binding sites in the C-terminal region of Rne and to RhlB.

It is found in the cytoplasm. Its function is as follows. Globally modulates RNA abundance by binding to RNase E (Rne) and regulating its endonucleolytic activity. Can modulate Rne action in a substrate-dependent manner by altering the composition of the degradosome. Modulates RNA-binding and helicase activities of the degradosome. This Yersinia pseudotuberculosis serotype O:1b (strain IP 31758) protein is Regulator of ribonuclease activity A.